The chain runs to 170 residues: RxLR effector protein PITG_07555 (170 aa).

The first 17 residues, 1–17, serve as a signal peptide directing secretion; sequence MQAYHLLLVCMYISCSA. The RxLR-dEER motif lies at 50 to 62; the sequence is RALRTHNPDREER.

Belongs to the RxLR effector family.

It localises to the secreted. The protein resides in the host cytoplasm. The protein localises to the host nucleus. Functionally, effector that enhances P.infestans colonization of Nicotiana benthamiana leaves. The protein is RxLR effector protein PITG_07555 of Phytophthora infestans (strain T30-4) (Potato late blight agent).